We begin with the raw amino-acid sequence, 218 residues long: Large ribosomal subunit protein uL3 (218 aa).

The protein belongs to the universal ribosomal protein uL3 family. In terms of assembly, part of the 50S ribosomal subunit. Forms a cluster with proteins L14 and L19.

One of the primary rRNA binding proteins, it binds directly near the 3'-end of the 23S rRNA, where it nucleates assembly of the 50S subunit. This Corynebacterium glutamicum (strain R) protein is Large ribosomal subunit protein uL3.